The sequence spans 138 residues: Protein E6 (138 aa).

2 zinc fingers span residues 25-61 (CNFC…CAAC) and 98-134 (CLIC…CRHC).

Belongs to the papillomaviridae E6 protein family. As to quaternary structure, forms homodimers. Interacts with ubiquitin-protein ligase UBE3A/E6-AP; this interaction stimulates UBE3A ubiquitin activity. Interacts with host BAK1.

It localises to the host cytoplasm. It is found in the host nucleus. Plays a major role in the induction and maintenance of cellular transformation. E6 associates with host UBE3A/E6-AP ubiquitin-protein ligase and modulates its activity. Protects host keratinocytes from apoptosis by mediating the degradation of host BAK1. May also inhibit host immune response. The protein is Protein E6 of Homo sapiens (Human).